The primary structure comprises 158 residues: MDQAKLARLQQSVRIGKGKGTPRRKTKKVHKSSGTDDKKLQTSLKKLNVQPIQAIEEVNMFKEDGNVIHFAAPKVHASVPSNTFAIYGNGEDKELTELVPGILNQLGPDSLASLRKLAESYQSMQKGEGGEDAKKDDDDDDDEIPDLVEGENFESKVE.

2 disordered regions span residues 1–40 (MDQA…DKKL) and 119–158 (ESYQ…SKVE). Positions 16-31 (GKGKGTPRRKTKKVHK) are enriched in basic residues. An NAC-A/B domain is found at 34 to 99 (GTDDKKLQTS…GEDKELTELV (66 aa)). Positions 137-152 (DDDDDDEIPDLVEGEN) are enriched in acidic residues.

Belongs to the NAC-beta family. Part of the nascent polypeptide-associated complex (NAC), consisting of EGD2 and EGD1. NAC associates with ribosomes via EGD1.

The protein resides in the cytoplasm. The protein localises to the nucleus. Component of the nascent polypeptide-associated complex (NAC), a dynamic component of the ribosomal exit tunnel, protecting the emerging polypeptides from interaction with other cytoplasmic proteins to ensure appropriate nascent protein targeting. The NAC complex also promotes mitochondrial protein import by enhancing productive ribosome interactions with the outer mitochondrial membrane and blocks the inappropriate interaction of ribosomes translating non-secretory nascent polypeptides with translocation sites in the membrane of the endoplasmic reticulum. EGD1 may act as a transcription factor that exert a negative effect on the expression of several genes that are transcribed by RNA polymerase II. In Ajellomyces capsulatus (strain NAm1 / WU24) (Darling's disease fungus), this protein is Nascent polypeptide-associated complex subunit beta (EGD1).